A 417-amino-acid polypeptide reads, in one-letter code: Serine hydroxymethyltransferase 1 (417 aa).

(6S)-5,6,7,8-tetrahydrofolate contacts are provided by residues L121 and 125-127; that span reads GHL. K229 bears the N6-(pyridoxal phosphate)lysine mark. 355 to 357 provides a ligand contact to (6S)-5,6,7,8-tetrahydrofolate; sequence SPF.

Belongs to the SHMT family. In terms of assembly, homodimer. Pyridoxal 5'-phosphate is required as a cofactor.

It localises to the cytoplasm. The catalysed reaction is (6R)-5,10-methylene-5,6,7,8-tetrahydrofolate + glycine + H2O = (6S)-5,6,7,8-tetrahydrofolate + L-serine. Its pathway is one-carbon metabolism; tetrahydrofolate interconversion. The protein operates within amino-acid biosynthesis; glycine biosynthesis; glycine from L-serine: step 1/1. Functionally, catalyzes the reversible interconversion of serine and glycine with tetrahydrofolate (THF) serving as the one-carbon carrier. This reaction serves as the major source of one-carbon groups required for the biosynthesis of purines, thymidylate, methionine, and other important biomolecules. Also exhibits THF-independent aldolase activity toward beta-hydroxyamino acids, producing glycine and aldehydes, via a retro-aldol mechanism. This chain is Serine hydroxymethyltransferase 1, found in Pectobacterium atrosepticum (strain SCRI 1043 / ATCC BAA-672) (Erwinia carotovora subsp. atroseptica).